The sequence spans 597 residues: Phosphoinositide phosphatase SAC7 (597 aa).

Positions 130–458 constitute an SAC domain; the sequence is LSVAEKTTGL…GDEISIQYSG (329 aa). A Phosphatase catalytic core motif is present at residues 393–404; sequence RSNCIDCLDRTN. 2 helical membrane passes run 528–548 and 559–579; these read AVAN…FATM and HKHL…AALV.

As to expression, ubiquitous.

It localises to the endoplasmic reticulum membrane. The protein localises to the cytoplasmic vesicle membrane. Phosphoinositide phosphatase that preferentially hydrolyzes PtdIns(4)P. Regulates the accumulation of PtdIns(4)P on membrane compartments at the tips of growing root hairs leading to proper root hair development. The chain is Phosphoinositide phosphatase SAC7 (SAC7) from Arabidopsis thaliana (Mouse-ear cress).